Here is a 762-residue protein sequence, read N- to C-terminus: MKTVKIRGYCDRLSAAPGETIRFYVSADTSDGSYEAELVRLIHGDTNPAGPGYKEESVKSAADGSYPARFQRTQFGSFVEVPDASGALLADGAFSVHTFLWSTTPGRGRQGLVSRWDDERQCGWSLAIEEGRLVFTIGDESGTTNRVISDRPLFQEVWYSVTAVFDPVQKTISLHQKSVVNRTNSRFGLVVPLDSDTTVSAVSQVSPGDSRTSLLIAGLGEAAAADGRTWCIANFNGKIDAPKLYGRALSSEEAMKLAEGTVAEPWSRLAHWDFSAGIGPDGIPTDHVVDISGNGHHGQCVNQPDRGSTGWNWDGHEENFIHCPQQYGALWFHEDCLDDCRWDKDFEITLPDGLKSDFYAMKIRYGDSEDYIPFFVLPPRGKATAKILVLASTFSYLAYANEQIMHKADIGQAVAGHTPVLNENDVELHRNLDYYGLSTYDGHVDGRGVQYTSWRRPILNLRPKHRQGFGSIWELPADLHLIDWLNHNGFDYDVATEHDLNEQGVDLLRRYNVVLTGSHPEYQTWANADAWEDYLADGGRGMYLAANGMYWIVSVHPEKPWVMEVRKELGVTAWEAPPGEYHYSTNGRRGGRFRGRARATQKIWGTGMSSFGFDHSGYFVQMPDSQDKRAAWIMDGIDPDERIGDGGLVGGGAGGYELDRYDLSLGTPPNTLLLASSVEHSVVYTVIPDDKSFPHPGMNGGEHPFVRADITYFSTANGGGMFSTSSISWLGSLSWNNYDNNVSRMTRNVLTQFMKDEPAPLV.

In terms of assembly, heterotetramer of two DmfA1 (alpha) and two DmfA2 (beta) subunits.

It carries out the reaction N,N-dimethylformamide + H2O = dimethylamine + formate. Hydrolyzes N,N-dimethylformamide, and to a lesser extent N,N-dimethylacetamide and N,N-diethylacetamide. Has no activity against the substituted amides N-methylformamide, N-ethylformamide, N-ethylformamide and N-methylacetamide or the unsubstituted amides formamide, nicotinamide, acetoamide, benzamide, acetamide and acrylamide. The chain is N,N-dimethylformamidase beta subunit from Paracoccus aminophilus.